Here is a 314-residue protein sequence, read N- to C-terminus: Methenyltetrahydromethanopterin cyclohydrolase (314 aa).

This sequence belongs to the MCH family.

It localises to the cytoplasm. It carries out the reaction 5,10-methenyl-5,6,7,8-tetrahydromethanopterin + H2O = N(5)-formyl-5,6,7,8-tetrahydromethanopterin + H(+). It participates in one-carbon metabolism; methanogenesis from CO(2); 5,10-methenyl-5,6,7,8-tetrahydromethanopterin from CO(2): step 3/3. In terms of biological role, catalyzes the reversible interconversion of 5-formyl-H(4)MPT to methenyl-H(4)MPT(+). This is Methenyltetrahydromethanopterin cyclohydrolase from Methanocorpusculum labreanum (strain ATCC 43576 / DSM 4855 / Z).